A 776-amino-acid polypeptide reads, in one-letter code: Semaphorin-4F (776 aa).

An N-terminal signal peptide occupies residues 1 to 39; sequence MLARAERPRPGPRPPPVFPFPPPLSLLLLLAILSAPVCG. Residues 40–665 lie on the Extracellular side of the membrane; it reads RVPRSVPRTS…GPSNRAHTVV (626 aa). The region spanning 47–515 is the Sema domain; that stretch reads RTSLPISEAD…SHTEVTQVNT (469 aa). Residue Asn-69 is glycosylated (N-linked (GlcNAc...) asparagine). Cys-117 and Cys-127 form a disulfide bridge. Asn-138 is a glycosylation site (N-linked (GlcNAc...) asparagine). Disulfide bonds link Cys-145–Cys-154, Cys-278–Cys-389, and Cys-302–Cys-348. The N-linked (GlcNAc...) asparagine glycan is linked to Asn-514. One can recognise a PSI domain in the interval 517–568; it reads NCGRLQSCSECILAQDPVCAWSFRLDACVAHAGEHRGMVQDIESADVSSLCP. Cystine bridges form between Cys-518/Cys-535, Cys-527/Cys-544, and Cys-592/Cys-633. The Ig-like C2-type domain occupies 585–640; that stretch reads VGHVVLPCSPSSAWASCVWHQPSGVTALTPRRDGLEVVVTPGAMGAYACECQEGGA. Residues 666–686 form a helical membrane-spanning segment; sequence GAGLVGFLLGVLAASLTLLLI. The Cytoplasmic portion of the chain corresponds to 687–776; the sequence is GRRQQRRRQR…PLATCDETSI (90 aa). The tract at residues 702-741 is disordered; the sequence is DKVGLDLGAPPSGTTSYSQDPPSPSPEDERLPLALGKRGS. A phosphoserine mark is found at Ser-724 and Ser-726. The short motif at 774–776 is the PDZ-binding element; it reads TSI.

It belongs to the semaphorin family. In terms of assembly, interacts (via PDZ-binding motif) with DLG4/SAP90 (via PDZ domain 2); this interaction may promote translocation of DLG4/SAP90 to the membrane. As to expression, expressed at low levels in the developing embryo. Expressed at high levels in the lung and adult central nervous system, including the dorsal root ganglia.

It localises to the cell membrane. Its subcellular location is the postsynaptic density. It is found in the perikaryon. The protein resides in the cell projection. The protein localises to the dendrite. In terms of biological role, probable cell surface receptor that regulates oligodendroglial precursor cell migration. Might also regulate differentiation of oligodendroglial precursor cells. Has growth cone collapse activity against retinal ganglion-cell axons. This is Semaphorin-4F (Sema4f) from Rattus norvegicus (Rat).